Reading from the N-terminus, the 352-residue chain is Cysteinyl leukotriene receptor 1 (352 aa).

The Extracellular segment spans residues 1–43 (MYLQGTKQTFLENMNGTENLTTSLINNTCHDTIDEFRNQVYST). Asparagine 15, asparagine 19, and asparagine 26 each carry an N-linked (GlcNAc...) asparagine glycan. A helical transmembrane segment spans residues 44–64 (MYSVISVVGFFGNSFVLYVLI). Topologically, residues 65–72 (KTYHEKSA) are cytoplasmic. The chain crosses the membrane as a helical span at residues 73 to 93 (FQVYMINLAIADLLCVCTLPL). Residues 94–121 (RVVYYVHKGKWLFGDFLCRLTTYALYVN) are Extracellular-facing. The cysteines at positions 111 and 188 are disulfide-linked. Residues 122–142 (LYCSIFFMTAMSFFRCVAIVF) form a helical membrane-spanning segment. Residues 143-156 (PVQNINLVTQKKAR) are Cytoplasmic-facing. Residues 157-177 (FVCIGIWIFVILTSSPFLMYK) traverse the membrane as a helical segment. At 178-208 (SYQDEKNNTKCFEPPQNNQAKKYVLILHYVS) the chain is on the extracellular side. Asparagine 184 carries an N-linked (GlcNAc...) asparagine glycan. The chain crosses the membrane as a helical span at residues 209-229 (LFFGFIIPFVTIIVCYTMIIL). The Cytoplasmic segment spans residues 230–245 (TLLKNTMKKNMPSRRK). The helical transmembrane segment at 246-266 (AIGMIIVVTAAFLVSFMPYHI) threads the bilayer. Topologically, residues 267–291 (QRTIHLHLLHSETRPCDSVLRMQKS) are extracellular. Residues 292–312 (VVITLSLAASNCCFDPLLYFF) form a helical membrane-spanning segment. Topologically, residues 313–352 (SGGNFRRRLSTFRKHSLSSMTYVPKKKASLPEKGEEICNE) are cytoplasmic.

The protein belongs to the G-protein coupled receptor 1 family. Widely expressed, with higher expression in the lung and skin, intermediate levels in the heart, kidney and stomach and lower levels in several other tissues. Isoform 1 is the most abundant form in all tested tissues.

The protein localises to the cell membrane. Its function is as follows. Receptor for cysteinyl leukotrienes mediating constriction of the microvascular smooth muscle during an inflammatory response. This response is mediated via a G-protein that activates a phosphatidylinositol-calcium second messenger system. The rank order of affinities for the leukotrienes is LTD4 &gt;&gt; LTE4 = LTC4 &gt;&gt; LTB4. The sequence is that of Cysteinyl leukotriene receptor 1 (Cysltr1) from Mus musculus (Mouse).